The chain runs to 122 residues: Large ribosomal subunit protein uL14 (122 aa).

It belongs to the universal ribosomal protein uL14 family. In terms of assembly, part of the 50S ribosomal subunit. Forms a cluster with proteins L3 and L19. In the 70S ribosome, L14 and L19 interact and together make contacts with the 16S rRNA in bridges B5 and B8.

Functionally, binds to 23S rRNA. Forms part of two intersubunit bridges in the 70S ribosome. In Ruminiclostridium cellulolyticum (strain ATCC 35319 / DSM 5812 / JCM 6584 / H10) (Clostridium cellulolyticum), this protein is Large ribosomal subunit protein uL14.